Here is a 262-residue protein sequence, read N- to C-terminus: Hydroxyethylthiazole kinase (262 aa).

M50 contributes to the substrate binding site. ATP is bound by residues R125 and T171. G198 lines the substrate pocket.

Belongs to the Thz kinase family. The cofactor is Mg(2+).

The catalysed reaction is 5-(2-hydroxyethyl)-4-methylthiazole + ATP = 4-methyl-5-(2-phosphooxyethyl)-thiazole + ADP + H(+). Its pathway is cofactor biosynthesis; thiamine diphosphate biosynthesis; 4-methyl-5-(2-phosphoethyl)-thiazole from 5-(2-hydroxyethyl)-4-methylthiazole: step 1/1. Its function is as follows. Catalyzes the phosphorylation of the hydroxyl group of 4-methyl-5-beta-hydroxyethylthiazole (THZ). The sequence is that of Hydroxyethylthiazole kinase from Escherichia coli O81 (strain ED1a).